We begin with the raw amino-acid sequence, 289 residues long: ATP synthase subunit a (289 aa).

6 consecutive transmembrane segments (helical) span residues 43 to 63 (AFHVDTLGWSVLLGVVFLFIF), 104 to 124 (IAPLALTVFVWIFLLNLIDLV), 160 to 180 (ISVFALIVFYSIKVKGIGGFL), 193 to 213 (IVVQILLIPVNFLLEFVTLIA), 232 to 252 (IFILIAVMFGSGMFLLSALGV), and 259 to 279 (AVFHILIITLQAFIFMMLTIV).

This sequence belongs to the ATPase A chain family. As to quaternary structure, F-type ATPases have 2 components, CF(1) - the catalytic core - and CF(0) - the membrane proton channel. CF(1) has five subunits: alpha(3), beta(3), gamma(1), delta(1), epsilon(1). CF(0) has three main subunits: a(1), b(2) and c(9-12). The alpha and beta chains form an alternating ring which encloses part of the gamma chain. CF(1) is attached to CF(0) by a central stalk formed by the gamma and epsilon chains, while a peripheral stalk is formed by the delta and b chains.

Its subcellular location is the cell inner membrane. Key component of the proton channel; it plays a direct role in the translocation of protons across the membrane. This is ATP synthase subunit a from Pseudomonas paraeruginosa (strain DSM 24068 / PA7) (Pseudomonas aeruginosa (strain PA7)).